Reading from the N-terminus, the 460-residue chain is Phosphomethylpyrimidine synthase (460 aa).

Substrate is bound by residues asparagine 80, methionine 109, tyrosine 138, histidine 174, 194-196 (SRG), 235-238 (DSLR), and glutamate 274. Histidine 278 serves as a coordination point for Zn(2+). Tyrosine 301 is a binding site for substrate. Histidine 342 provides a ligand contact to Zn(2+). The [4Fe-4S] cluster site is built by cysteine 422, cysteine 425, and cysteine 430.

This sequence belongs to the ThiC family. As to quaternary structure, homodimer. [4Fe-4S] cluster serves as cofactor.

It carries out the reaction 5-amino-1-(5-phospho-beta-D-ribosyl)imidazole + S-adenosyl-L-methionine = 4-amino-2-methyl-5-(phosphooxymethyl)pyrimidine + CO + 5'-deoxyadenosine + formate + L-methionine + 3 H(+). Its pathway is cofactor biosynthesis; thiamine diphosphate biosynthesis. Catalyzes the synthesis of the hydroxymethylpyrimidine phosphate (HMP-P) moiety of thiamine from aminoimidazole ribotide (AIR) in a radical S-adenosyl-L-methionine (SAM)-dependent reaction. This Sulfurimonas denitrificans (strain ATCC 33889 / DSM 1251) (Thiomicrospira denitrificans (strain ATCC 33889 / DSM 1251)) protein is Phosphomethylpyrimidine synthase.